We begin with the raw amino-acid sequence, 451 residues long: Heme sensor protein HssS (451 aa).

2 helical membrane passes run 9 to 29 and 164 to 184; these read IAIYAITVILFSALMSFLFTN and IFLAVLITLLLIISISLVIAS. The HAMP domain occupies 186–238; sequence YSIIKPVTALKNATTRIMKGDFSTPIKQTRHDEIGTLQSRFNTMRQNLGQVDQ. Positions 246–451 constitute a Histidine kinase domain; sequence NVSHEVKTPL…KTQFIVKLFI (206 aa). The residue at position 249 (H249) is a Phosphohistidine; by autocatalysis.

Autophosphorylated.

Its subcellular location is the cell membrane. The enzyme catalyses ATP + protein L-histidine = ADP + protein N-phospho-L-histidine.. Its function is as follows. Member of the two-component regulatory system HssS/HssR involved in intracellular heme homeostasis and tempering of staphylococcal virulence. HssS functions as a heme sensor histidine kinase which is autophosphorylated at a histidine residue and transfers its phosphate group to an aspartate residue of HssR. HssR/HssS activates the expression of HrtAB, an efflux pump, in response to extracellular heme, hemin, hemoglobin or blood. The polypeptide is Heme sensor protein HssS (hssS) (Staphylococcus epidermidis (strain ATCC 35984 / DSM 28319 / BCRC 17069 / CCUG 31568 / BM 3577 / RP62A)).